The sequence spans 394 residues: Dual-specificity RNA methyltransferase RlmN (394 aa).

The Proton acceptor role is filled by glutamate 115. The Radical SAM core domain maps to 121 to 363 (DEGRGTLCVS…SPIRTPRGED (243 aa)). Cysteine 128 and cysteine 368 form a disulfide bridge. [4Fe-4S] cluster contacts are provided by cysteine 135, cysteine 139, and cysteine 142. S-adenosyl-L-methionine is bound by residues 194-195 (GE), serine 226, 248-250 (SFH), and asparagine 325. Residue cysteine 368 is the S-methylcysteine intermediate of the active site.

Belongs to the radical SAM superfamily. RlmN family. Requires [4Fe-4S] cluster as cofactor.

The protein resides in the cytoplasm. The enzyme catalyses adenosine(2503) in 23S rRNA + 2 reduced [2Fe-2S]-[ferredoxin] + 2 S-adenosyl-L-methionine = 2-methyladenosine(2503) in 23S rRNA + 5'-deoxyadenosine + L-methionine + 2 oxidized [2Fe-2S]-[ferredoxin] + S-adenosyl-L-homocysteine. The catalysed reaction is adenosine(37) in tRNA + 2 reduced [2Fe-2S]-[ferredoxin] + 2 S-adenosyl-L-methionine = 2-methyladenosine(37) in tRNA + 5'-deoxyadenosine + L-methionine + 2 oxidized [2Fe-2S]-[ferredoxin] + S-adenosyl-L-homocysteine. In terms of biological role, specifically methylates position 2 of adenine 2503 in 23S rRNA and position 2 of adenine 37 in tRNAs. m2A2503 modification seems to play a crucial role in the proofreading step occurring at the peptidyl transferase center and thus would serve to optimize ribosomal fidelity. In Roseobacter denitrificans (strain ATCC 33942 / OCh 114) (Erythrobacter sp. (strain OCh 114)), this protein is Dual-specificity RNA methyltransferase RlmN.